Here is a 436-residue protein sequence, read N- to C-terminus: Gamma-glutamyl phosphate reductase (436 aa).

The protein belongs to the gamma-glutamyl phosphate reductase family.

Its subcellular location is the cytoplasm. It carries out the reaction L-glutamate 5-semialdehyde + phosphate + NADP(+) = L-glutamyl 5-phosphate + NADPH + H(+). Its pathway is amino-acid biosynthesis; L-proline biosynthesis; L-glutamate 5-semialdehyde from L-glutamate: step 2/2. Its function is as follows. Catalyzes the NADPH-dependent reduction of L-glutamate 5-phosphate into L-glutamate 5-semialdehyde and phosphate. The product spontaneously undergoes cyclization to form 1-pyrroline-5-carboxylate. This is Gamma-glutamyl phosphate reductase from Prochlorococcus marinus (strain MIT 9515).